We begin with the raw amino-acid sequence, 544 residues long: Chaperonin GroEL (544 aa).

ATP-binding positions include Thr-29–Pro-32, Asp-86–Thr-90, Gly-413, Asn-476–Ala-478, and Asp-492.

The protein belongs to the chaperonin (HSP60) family. As to quaternary structure, forms a cylinder of 14 subunits composed of two heptameric rings stacked back-to-back. Interacts with the co-chaperonin GroES.

It localises to the cytoplasm. It catalyses the reaction ATP + H2O + a folded polypeptide = ADP + phosphate + an unfolded polypeptide.. Functionally, together with its co-chaperonin GroES, plays an essential role in assisting protein folding. The GroEL-GroES system forms a nano-cage that allows encapsulation of the non-native substrate proteins and provides a physical environment optimized to promote and accelerate protein folding. This Bacillus velezensis (strain DSM 23117 / BGSC 10A6 / LMG 26770 / FZB42) (Bacillus amyloliquefaciens subsp. plantarum) protein is Chaperonin GroEL.